The following is a 219-amino-acid chain: Proteasome subunit beta type-9 (219 aa).

Positions 1–20 are cleaved as a propeptide — removed in mature form; sequence MLRAGAPTAGSFRTEEVHTG. Thr21 (nucleophile) is an active-site residue. Lys53 and Lys109 each carry N6-acetyllysine.

The protein belongs to the peptidase T1B family. As to quaternary structure, the 26S proteasome consists of a 20S proteasome core and two 19S regulatory subunits. The 20S proteasome core is composed of 28 subunits that are arranged in four stacked rings, resulting in a barrel-shaped structure. The two end rings are each formed by seven alpha subunits, and the two central rings are each formed by seven beta subunits. The catalytic chamber with the active sites is on the inside of the barrel. Component of the immunoproteasome, where it displaces the equivalent housekeeping subunit PSMB6. Component of the spermatoproteasome, a form of the proteasome specifically found in testis. Autocleaved. The resulting N-terminal Thr residue of the mature subunit is responsible for the nucleophile proteolytic activity.

It localises to the cytoplasm. The protein localises to the nucleus. It carries out the reaction Cleavage of peptide bonds with very broad specificity.. The proteasome is a multicatalytic proteinase complex which is characterized by its ability to cleave peptides with Arg, Phe, Tyr, Leu, and Glu adjacent to the leaving group at neutral or slightly basic pH. The proteasome has an ATP-dependent proteolytic activity. This subunit is involved in antigen processing to generate class I binding peptides. The sequence is that of Proteasome subunit beta type-9 (Psmb9) from Mus spicilegus (Steppe mouse).